The chain runs to 375 residues: 23S rRNA (uracil(747)-C(5))-methyltransferase RlmC (375 aa).

Residues Cys-3, Cys-11, Cys-14, and Cys-87 each contribute to the [4Fe-4S] cluster site. Gln-212, Phe-241, Glu-262, and Asn-307 together coordinate S-adenosyl-L-methionine. Residue Cys-334 is the Nucleophile of the active site.

It belongs to the class I-like SAM-binding methyltransferase superfamily. RNA M5U methyltransferase family. RlmC subfamily.

The enzyme catalyses uridine(747) in 23S rRNA + S-adenosyl-L-methionine = 5-methyluridine(747) in 23S rRNA + S-adenosyl-L-homocysteine + H(+). Its function is as follows. Catalyzes the formation of 5-methyl-uridine at position 747 (m5U747) in 23S rRNA. This chain is 23S rRNA (uracil(747)-C(5))-methyltransferase RlmC, found in Shigella flexneri serotype 5b (strain 8401).